The primary structure comprises 224 residues: tRNA (guanine-N(7)-)-methyltransferase (224 aa).

The S-adenosyl-L-methionine site is built by Glu56, Glu81, Asp108, and Asp131. Asp131 is a catalytic residue. Residues Lys135, Asp167, and 202-205 each bind substrate; that span reads TKFE.

The protein belongs to the class I-like SAM-binding methyltransferase superfamily. TrmB family.

The catalysed reaction is guanosine(46) in tRNA + S-adenosyl-L-methionine = N(7)-methylguanosine(46) in tRNA + S-adenosyl-L-homocysteine. It participates in tRNA modification; N(7)-methylguanine-tRNA biosynthesis. Catalyzes the formation of N(7)-methylguanine at position 46 (m7G46) in tRNA. The polypeptide is tRNA (guanine-N(7)-)-methyltransferase (Nitrosomonas europaea (strain ATCC 19718 / CIP 103999 / KCTC 2705 / NBRC 14298)).